The following is an 826-amino-acid chain: Ubiquitin carboxyl-terminal hydrolase 16 (826 aa).

Residues 1–23 (MGKKRTKGKSVPEKASSESTEPM) form a disordered region. The UBP-type zinc-finger motif lies at 22-141 (PMCRHLRKGL…QVVDYVRKQA (120 aa)). Positions 24, 26, 48, 51, 73, 76, 81, 89, 93, 102, 115, and 118 each coordinate Zn(2+). Residue Lys139 forms a Glycyl lysine isopeptide (Lys-Gly) (interchain with G-Cter in SUMO2) linkage. Residues 145-184 (TSKPAEKNNGHIELENKKLEKESKNEQEREKSESMAKENI) form a disordered region. Positions 148 to 180 (PAEKNNGHIELENKKLEKESKNEQEREKSESMA) are enriched in basic and acidic residues. Ser188 carries the post-translational modification Phosphoserine. Positions 195–825 (KGLSNLGNTC…QAYLLFYERI (631 aa)) constitute a USP domain. The active-site Nucleophile is the Cys204. Over residues 392-407 (QSGKKNINDKNVKKTM) the composition is skewed to basic and acidic residues. Disordered regions lie at residues 392–456 (QSGK…RRQQ) and 526–553 (ADER…TSAP). Residues 408-419 (EEEDKDSEEEKD) are compositionally biased toward acidic residues. Ser414 carries the post-translational modification Phosphoserine. Over residues 436-456 (HTQKKAKKQAKKQAKNQRRQQ) the composition is skewed to basic residues. A compositionally biased stretch (basic and acidic residues) spans 526–537 (ADERKCPEHPEV). Polar residues predominate over residues 539–551 (SVSTESDLGSLTS). His760 (proton acceptor) is an active-site residue.

The protein belongs to the peptidase C19 family. USP16 subfamily. In terms of assembly, homotetramer. Associates with late pre-40S ribosomes. Interacts with CEP78; promoting deubiquitination of tektins. Post-translationally, phosphorylated at the onset of mitosis and dephosphorylated during the metaphase/anaphase transition. Phosphorylation by AURKB enhances the deubiquitinase activity.

It is found in the nucleus. The enzyme catalyses Thiol-dependent hydrolysis of ester, thioester, amide, peptide and isopeptide bonds formed by the C-terminal Gly of ubiquitin (a 76-residue protein attached to proteins as an intracellular targeting signal).. In terms of biological role, specifically deubiquitinates 'Lys-120' of histone H2A (H2AK119Ub), a specific tag for epigenetic transcriptional repression, thereby acting as a coactivator. Deubiquitination of histone H2A is a prerequisite for subsequent phosphorylation at 'Ser-11' of histone H3 (H3S10ph), and is required for chromosome segregation when cells enter into mitosis. In resting B- and T-lymphocytes, phosphorylation by AURKB leads to enhance its activity, thereby maintaining transcription in resting lymphocytes. Regulates Hox gene expression via histone H2A deubiquitination. Prefers nucleosomal substrates. Does not deubiquitinate histone H2B. Also deubiquitinates non-histone proteins, such as ribosomal protein RPS27A: deubiquitination of monoubiquitinated RPS27A promotes maturation of the 40S ribosomal subunit. Also mediates deubiquitination of tektin proteins (TEKT1, TEKT2, TEK3, TEKT4 and TEKT5), promoting their stability. This is Ubiquitin carboxyl-terminal hydrolase 16 (Usp16) from Rattus norvegicus (Rat).